Consider the following 289-residue polypeptide: Putative 2-aminoethylphosphonate transport system permease protein PhnU (289 aa).

The next 6 membrane-spanning stretches (helical) occupy residues 19–39 (WLLL…SLIV), 76–96 (FFAT…LVFI), 111–131 (FIAL…GSAG), 150–170 (FLYS…PLVM), 202–222 (VIFP…LLLT), and 254–274 (YTVA…LFSL). Residues 68 to 275 (LLNTLQIAFF…VLSLGLFSLY (208 aa)) form the ABC transmembrane type-1 domain.

This sequence belongs to the binding-protein-dependent transport system permease family.

The protein resides in the cell inner membrane. Functionally, probably part of the PhnSTUV complex (TC 3.A.1.11.5) involved in 2-aminoethylphosphonate import. Probably responsible for the translocation of the substrate across the membrane. The polypeptide is Putative 2-aminoethylphosphonate transport system permease protein PhnU (phnU) (Salmonella typhi).